Consider the following 271-residue polypeptide: Putative phosphoenolpyruvate synthase regulatory protein (271 aa).

Residue 151–158 (GVSRSGKT) participates in ADP binding.

This sequence belongs to the pyruvate, phosphate/water dikinase regulatory protein family. PSRP subfamily.

It catalyses the reaction [pyruvate, water dikinase] + ADP = [pyruvate, water dikinase]-phosphate + AMP + H(+). The enzyme catalyses [pyruvate, water dikinase]-phosphate + phosphate + H(+) = [pyruvate, water dikinase] + diphosphate. Its function is as follows. Bifunctional serine/threonine kinase and phosphorylase involved in the regulation of the phosphoenolpyruvate synthase (PEPS) by catalyzing its phosphorylation/dephosphorylation. This Burkholderia vietnamiensis (strain G4 / LMG 22486) (Burkholderia cepacia (strain R1808)) protein is Putative phosphoenolpyruvate synthase regulatory protein.